The chain runs to 60 residues: MPARKPAGARPEKPCPICGKPAVAASRPFCSERCRDVDLNRWLSGSYVIPVSKTDGEDAE.

The Zn(2+) site is built by Cys15, Cys18, Cys30, and Cys34.

It belongs to the DNA gyrase inhibitor YacG family. Interacts with GyrB. Requires Zn(2+) as cofactor.

Inhibits all the catalytic activities of DNA gyrase by preventing its interaction with DNA. Acts by binding directly to the C-terminal domain of GyrB, which probably disrupts DNA binding by the gyrase. The protein is DNA gyrase inhibitor YacG of Nitrobacter hamburgensis (strain DSM 10229 / NCIMB 13809 / X14).